The sequence spans 337 residues: Anthranilate phosphoribosyltransferase (337 aa).

Residues glycine 82, 85–86, threonine 90, 92–95, 110–118, and serine 122 contribute to the 5-phospho-alpha-D-ribose 1-diphosphate site; these read GD, NIST, and KHGGRSVSS. An anthranilate-binding site is contributed by glycine 82. Residue serine 94 participates in Mg(2+) binding. Residue arginine 168 coordinates anthranilate. Positions 226 and 227 each coordinate Mg(2+).

Belongs to the anthranilate phosphoribosyltransferase family. As to quaternary structure, homodimer. Mg(2+) is required as a cofactor.

It carries out the reaction N-(5-phospho-beta-D-ribosyl)anthranilate + diphosphate = 5-phospho-alpha-D-ribose 1-diphosphate + anthranilate. The protein operates within amino-acid biosynthesis; L-tryptophan biosynthesis; L-tryptophan from chorismate: step 2/5. In terms of biological role, catalyzes the transfer of the phosphoribosyl group of 5-phosphorylribose-1-pyrophosphate (PRPP) to anthranilate to yield N-(5'-phosphoribosyl)-anthranilate (PRA). The chain is Anthranilate phosphoribosyltransferase from Francisella tularensis subsp. tularensis (strain WY96-3418).